Here is a 300-residue protein sequence, read N- to C-terminus: 3-dehydrocarnitine:acetyl-CoA trimethylamine transferase (300 aa).

Residues H51, H53, and E254 each contribute to the Zn(2+) site.

Belongs to the BKACE family. Homotetramer. It depends on Zn(2+) as a cofactor.

It carries out the reaction 3-dehydrocarnitine + acetyl-CoA = N,N,N-trimethylglycyl-CoA + acetoacetate. Its pathway is amine and polyamine metabolism; carnitine metabolism. In terms of biological role, catalyzes the condensation of dehydrocarnitine and acetyl-CoA, forming acetoacetate and betainyl-CoA (N,N,N-trimethylglycyl-CoA). Is involved in a L-carnitine degradation pathway that allows R.meliloti to grow on L-carnitine as the sole source of carbon and nitrogen. The chain is 3-dehydrocarnitine:acetyl-CoA trimethylamine transferase from Rhizobium meliloti (strain 1021) (Ensifer meliloti).